Here is a 1603-residue protein sequence, read N- to C-terminus: Transcription factor Gibbin (1603 aa).

Disordered stretches follow at residues 19–108 (PDYL…SSSR), 150–236 (LRLS…STDY), 264–285 (LEPP…FLDP), and 394–467 (CRRR…RKGK). Residues 30–47 (GGPPTPRPLLPTRPPASP) are compositionally biased toward pro residues. Lys-79 is subject to N6-acetyllysine. Residues 166-178 (SFFSSPSLANSIR) show a composition bias toward polar residues. Basic and acidic residues predominate over residues 179–194 (SPEERATPHAKSERPS). The segment covering 216-225 (PGATAAATGL) has biased composition (low complexity). Residue Ser-268 is modified to Phosphoserine. The span at 273 to 285 (PQLLDPQPRFLDP) shows a compositional bias: low complexity. The a.T hook 1 DNA-binding region spans 396–408 (RRKAGRGRKADAG). Over residues 428–446 (EPPPPPPPPPPALPGPGPV) the composition is skewed to pro residues. Residues 544–556 (KRKRGRPPKNLLL) constitute a DNA-binding region (a.T hook 2). Residues 581-607 (MPEVKKRRRRKQKLASPQPSYAADAND) form a disordered region. A Phosphoserine modification is found at Ser-596. Residue Lys-609 forms a Glycyl lysine isopeptide (Lys-Gly) (interchain with G-Cter in SUMO2) linkage. Disordered stretches follow at residues 717 to 792 (LTEL…RNCG) and 806 to 827 (LESG…GQTE). Basic residues predominate over residues 737 to 746 (KPKRKRRSRK). The span at 816 to 827 (YYSTGAPSGQTE) shows a compositional bias: polar residues. Ser-829 and Ser-846 each carry phosphoserine. The residue at position 891 (Arg-891) is an Omega-N-methylarginine. Phosphoserine occurs at positions 896 and 1064. Disordered regions lie at residues 1159-1198 (VSET…QSSL) and 1253-1286 (ASAA…KKER). Low complexity-rich tracts occupy residues 1160–1171 (SETFSESSSDST) and 1187–1198 (SEASSSEGQSSL). Ser-1187 carries the post-translational modification Phosphoserine. Phosphoserine occurs at positions 1322, 1324, and 1399. Thr-1401 is modified (phosphothreonine). Ser-1403 is subject to Phosphoserine. Lys-1409 is covalently cross-linked (Glycyl lysine isopeptide (Lys-Gly) (interchain with G-Cter in SUMO2)). The segment at 1503-1533 (PHLASPPATPKADKEPLEMARPPGPPRGPAA) is disordered. Phosphoserine is present on residues Ser-1507 and Ser-1549.

The protein localises to the nucleus. Its subcellular location is the chromosome. Transcription factor required for the proper patterning of the epidermis, which plays a key role in early epithelial morphogenesis. Directly binds promoter and enhancer regions and acts by maintaining local enhancer-promoter chromatin architecture. Interacts with many sequence-specific zinc-finger transcription factors and methyl-CpG-binding proteins to regulate the expression of mesoderm genes that wire surface ectoderm stratification. The polypeptide is Transcription factor Gibbin (Homo sapiens (Human)).